The sequence spans 214 residues: 3-isopropylmalate dehydratase small subunit (214 aa).

This sequence belongs to the LeuD family. LeuD type 1 subfamily. In terms of assembly, heterodimer of LeuC and LeuD.

It catalyses the reaction (2R,3S)-3-isopropylmalate = (2S)-2-isopropylmalate. It functions in the pathway amino-acid biosynthesis; L-leucine biosynthesis; L-leucine from 3-methyl-2-oxobutanoate: step 2/4. In terms of biological role, catalyzes the isomerization between 2-isopropylmalate and 3-isopropylmalate, via the formation of 2-isopropylmaleate. This is 3-isopropylmalate dehydratase small subunit from Pseudomonas fluorescens (strain ATCC BAA-477 / NRRL B-23932 / Pf-5).